A 335-amino-acid polypeptide reads, in one-letter code: MDLIIPASYDPKLSVRQTQEAIRYIRETFQDEFGKELNLSRLSAPMFVPSATGLNDNLNGVETPVSFSMQDMPETSIEIVHSLAKWKRVALKRFDFEMHSGLYTNMNAIRKDEDLDNIHSIYVDQWDWEKVIDQSERNLTTLKETVQTIFKVIKHMEHEVWYKYPEAVYHLPDQIHFVTTQELEDRFPKLTPKEREDAICKELGCVFLMQIGGTLKSGERHDGRAPDYDDWQLNGDILFWYEPLQKALEISSMGIRVSEESMLKQLKIANAEDRIHLPYHQMLLNHQLPYTIGGGIGQSRLCMLLLGKAHVGEVQASVWPQSMIDQCEENQIHIL.

Belongs to the class-II aminoacyl-tRNA synthetase family. AsnA subfamily.

It localises to the cytoplasm. The catalysed reaction is L-aspartate + NH4(+) + ATP = L-asparagine + AMP + diphosphate + H(+). Its pathway is amino-acid biosynthesis; L-asparagine biosynthesis; L-asparagine from L-aspartate (ammonia route): step 1/1. The protein is Aspartate--ammonia ligase of Pediococcus pentosaceus (strain ATCC 25745 / CCUG 21536 / LMG 10740 / 183-1w).